The chain runs to 116 residues: Large ribosomal subunit protein uL18 (116 aa).

It belongs to the universal ribosomal protein uL18 family. Part of the 50S ribosomal subunit; part of the 5S rRNA/L5/L18/L25 subcomplex. Contacts the 5S and 23S rRNAs.

Its function is as follows. This is one of the proteins that bind and probably mediate the attachment of the 5S RNA into the large ribosomal subunit, where it forms part of the central protuberance. This is Large ribosomal subunit protein uL18 from Shewanella woodyi (strain ATCC 51908 / MS32).